The primary structure comprises 72 residues: Teretoxin Tsu11.2 (72 aa).

Positions 1-21 are cleaved as a signal peptide; sequence MMAKATMAFCFLLMLTTVMLP. A propeptide spanning residues 22-30 is cleaved from the precursor; the sequence is TEGKTIAGR.

The protein belongs to the teretoxin H (TH) superfamily. In terms of processing, contains 4 disulfide bonds. As to expression, expressed by the venom duct.

The protein resides in the secreted. The sequence is that of Teretoxin Tsu11.2 from Terebra subulata (Chocolate spotted auger).